We begin with the raw amino-acid sequence, 413 residues long: Serine hydroxymethyltransferase (413 aa).

Residues L119 and 123–125 (GHL) contribute to the (6S)-5,6,7,8-tetrahydrofolate site. N6-(pyridoxal phosphate)lysine is present on K228. 351 to 353 (SPF) provides a ligand contact to (6S)-5,6,7,8-tetrahydrofolate.

The protein belongs to the SHMT family. In terms of assembly, homodimer. It depends on pyridoxal 5'-phosphate as a cofactor.

The protein resides in the cytoplasm. It carries out the reaction (6R)-5,10-methylene-5,6,7,8-tetrahydrofolate + glycine + H2O = (6S)-5,6,7,8-tetrahydrofolate + L-serine. The protein operates within one-carbon metabolism; tetrahydrofolate interconversion. It functions in the pathway amino-acid biosynthesis; glycine biosynthesis; glycine from L-serine: step 1/1. In terms of biological role, catalyzes the reversible interconversion of serine and glycine with tetrahydrofolate (THF) serving as the one-carbon carrier. This reaction serves as the major source of one-carbon groups required for the biosynthesis of purines, thymidylate, methionine, and other important biomolecules. Also exhibits THF-independent aldolase activity toward beta-hydroxyamino acids, producing glycine and aldehydes, via a retro-aldol mechanism. This is Serine hydroxymethyltransferase from Lysinibacillus sphaericus (strain C3-41).